The sequence spans 284 residues: Nucleotide-binding protein NMCC_0698 (284 aa).

8-15 contributes to the ATP binding site; sequence GLSGSGKS. 58 to 61 contributes to the GTP binding site; the sequence is DVRS.

The protein belongs to the RapZ-like family.

Its function is as follows. Displays ATPase and GTPase activities. The sequence is that of Nucleotide-binding protein NMCC_0698 from Neisseria meningitidis serogroup C (strain 053442).